The chain runs to 900 residues: Phosphoenolpyruvate carboxylase (900 aa).

Active-site residues include histidine 140 and lysine 568.

The protein belongs to the PEPCase type 1 family. Mg(2+) serves as cofactor.

It carries out the reaction oxaloacetate + phosphate = phosphoenolpyruvate + hydrogencarbonate. Its function is as follows. Forms oxaloacetate, a four-carbon dicarboxylic acid source for the tricarboxylic acid cycle. The polypeptide is Phosphoenolpyruvate carboxylase (Neisseria meningitidis serogroup A / serotype 4A (strain DSM 15465 / Z2491)).